A 364-amino-acid chain; its full sequence is Spermidine/putrescine import ATP-binding protein PotA (364 aa).

The ABC transporter domain maps to 6–236 (IEIRQIYKSY…PANLHVAMFI (231 aa)). 38–45 (GPSGCGKT) provides a ligand contact to ATP.

This sequence belongs to the ABC transporter superfamily. Spermidine/putrescine importer (TC 3.A.1.11.1) family. The complex is composed of two ATP-binding proteins (PotA), two transmembrane proteins (PotB and PotC) and a solute-binding protein (PotD).

The protein resides in the cell inner membrane. The catalysed reaction is ATP + H2O + polyamine-[polyamine-binding protein]Side 1 = ADP + phosphate + polyamineSide 2 + [polyamine-binding protein]Side 1.. Its function is as follows. Part of the ABC transporter complex PotABCD involved in spermidine/putrescine import. Responsible for energy coupling to the transport system. The polypeptide is Spermidine/putrescine import ATP-binding protein PotA (Legionella pneumophila (strain Lens)).